Here is a 534-residue protein sequence, read N- to C-terminus: Prolyl 4-hydroxylase subunit alpha-1 (534 aa).

Positions 1 to 17 (MIWYILVVGILLPQSLA) are cleaved as a signal peptide. Asparagine 113 carries an N-linked (GlcNAc...) asparagine glycan. The TPR repeat unit spans residues 205–238 (VSVLDYLSYAVYQQGDLDKALLLTKKLLELDPEH). A disordered region spans residues 258-277 (ANKSSSDDQSDQKTTLKKKG). Asparagine 259 is a glycosylation site (N-linked (GlcNAc...) asparagine). One can recognise a Fe2OG dioxygenase domain in the interval 411 to 519 (TAEELQVANY…KWVSNKWLHE (109 aa)). Positions 429, 431, and 500 each coordinate Fe cation. A 2-oxoglutarate-binding site is contributed by lysine 510.

The protein belongs to the P4HA family. Heterotetramer of two alpha-1 chains and two beta chains (P4HB)(the beta chain is the multi-functional PDI), where P4HB plays the role of a structural subunit; this tetramer catalyzes the formation of 4-hydroxyproline in collagen. It depends on Fe(2+) as a cofactor. L-ascorbate is required as a cofactor.

The protein resides in the endoplasmic reticulum lumen. The enzyme catalyses L-prolyl-[collagen] + 2-oxoglutarate + O2 = trans-4-hydroxy-L-prolyl-[collagen] + succinate + CO2. Its function is as follows. Catalyzes the post-translational formation of 4-hydroxyproline in -Xaa-Pro-Gly- sequences in collagens and other proteins. This chain is Prolyl 4-hydroxylase subunit alpha-1 (P4HA1), found in Bos taurus (Bovine).